Reading from the N-terminus, the 2471-residue chain is Polyprotein P1234 (2471 aa).

Residues 28–257 enclose the Alphavirus-like MT domain; the sequence is EATQVTDNDH…EERILLRSWH (230 aa). The nsP1 membrane-binding stretch occupies residues 242 to 261; it reads GSTIYTEERILLRSWHLPNV. A lipid anchor (S-palmitoyl cysteine; by host) is attached at Cys-417. The (+)RNA virus helicase ATP-binding domain maps to 688-839; sequence DLVDPPFHEF…HEICTEVYHK (152 aa). An a ribonucleoside 5'-triphosphate-binding site is contributed by 719–726; that stretch reads GVPGSGKS. Positions 840 to 988 constitute a (+)RNA virus helicase C-terminal domain; that stretch reads SISRRCTRTV…LEEWQAEHDA (149 aa). Positions 1001 to 1320 constitute a Peptidase C9 domain; that stretch reads DVYQNKVHVC…VVLNNIYQGS (320 aa). Residues 1002–1021 form a nucleolus localization signal region; that stretch reads VYQNKVHVCWAKALEPVLAT. The For cysteine protease nsP2 activity role is filled by Cys-1010. The Nuclear export signal motif lies at 1054-1063; sequence TRFFGVDIDS. His-1079 serves as the catalytic For cysteine protease nsP2 activity. Positions 1177 to 1181 match the Nuclear localization signal motif; the sequence is PGKRV. One can recognise a Macro domain in the interval 1328–1486; that stretch reads APAYRVIRGD…RIKDAIARKE (159 aa). Residues Asp-1337, Asn-1351, Gly-1359, Gly-1438, Val-1439, and Tyr-1440 each contribute to the ADP-D-ribose site. Cys-1589, Cys-1591, Cys-1614, and Cys-1632 together coordinate Zn(2+). The disordered stretch occupies residues 1669–1692; it reads RRPAPPVPVPARIPSPRCSPAVSM. Pro residues predominate over residues 1670 to 1681; it reads RPAPPVPVPARI. Residues 1771–1783 are binding to host G3BP family members; it reads LITFDSVTDIFEN. Residues 1798 to 1838 are disordered; sequence IPAPRRRREPETDIQRFDKSEEKPVPKPRTRTAKYKKPPGV. Over residues 1805 to 1822 the composition is skewed to basic and acidic residues; sequence REPETDIQRFDKSEEKPV. Residues 1823 to 1834 are compositionally biased toward basic residues; sequence PKPRTRTAKYKK. Residues 1835–1851 are binding to host FXR family members; sequence PPGVARSISEAELDEFI. The 116-residue stretch at 2228–2343 folds into the RdRp catalytic domain; it reads DAVLETDIAS…KGVKSDALMA (116 aa).

Interacts with non-structural protein 3. Interacts with RNA-directed RNA polymerase nsP4. Interacts with protease nsP2. interacts with itself. As to quaternary structure, interacts with mRNA-capping enzyme nsP1. Interacts with host DDX1. Interacts with host DDX3. Interacts (via C-terminus) with host FXR1; this interaction inhibits the formation of host stress granules on viral mRNAs and the nsp3-FXR1 complexes bind viral RNAs and probably orchestrate the assembly of viral replication complexes. Interacts (via C-terminus) with host FXR2; this interaction inhibits the formation of host stress granules on viral mRNAs and the nsp3-FXR2 complexes bind viral RNAs and probably orchestrate the assembly of viral replication complexes. Interacts (via C-terminus) with host FMR1; this interaction inhibits the formation of host stress granules on viral mRNAs and the nsp3-FMR1 complexes bind viral RNAs and probably orchestrate the assembly of viral replication complexes. Interacts (via C-terminus) with host G3BP1; this interaction inhibits the formation of host stress granules on viral mRNAs and the nsp3-G3BP1 complexes bind viral RNAs and probably orchestrate the assembly of viral replication complexes. Interacts (via C-terminus) with host G3BP2; this interaction inhibits the formation of host stress granules on viral mRNAs and the nsp3-G3BP2 complexes bind viral RNAs and probably orchestrate the assembly of viral replication complexes. In terms of assembly, interacts with mRNA-capping enzyme nsP1. Interacts with protease nsP2. interacts with itself. Interacts with RNA-directed RNA polymerase nsP4. Interacts with mRNA-capping enzyme nsP1. Interacts with KPNA1/karyopherin-alpha1; this interaction probably allows the active transport of protease nsP2 into the host nucleus. Mg(2+) is required as a cofactor. The cofactor is Mn(2+). In terms of processing, specific enzymatic cleavages in vivo yield mature proteins. The processing of the polyprotein is temporally regulated. In early stages (1.7 hpi), P1234 is first cleaved in trans through its nsP2 protease activity, releasing P123' and nsP4, which associate to form the early replication complex. At the same time, P1234 is also cut at the nsP1/nsP2 site early in infection but with lower efficiency. After replication of the viral minus-strand RNAs (4 hpi), the polyproteins are cut at the nsP1/nsP2 and nsP2/nsP3 sites very efficiently, preventing accumulation of P123' and P1234 and allowing the formation of the late replication complex. NsP3'/nsP4 site is not cleaved anymore and P34 is produced rather than nsP4. Post-translationally, specific enzymatic cleavages in vivo yield mature proteins. The processing of the polyprotein is temporally regulated. In early stages (1.7 hpi), P123 is cleaved at the nsP1/nsP2 site with low efficiency. After replication of the viral minus-strand RNAs (4 hpi), the polyproteins are cut at the nsP1/nsP2 and nsP2/nsP3 sites very efficiently, preventing accumulation of P123 and allowing the formation of the late replication complex. Specific enzymatic cleavages in vivo yield mature proteins. The processing of the polyprotein is temporally regulated. In early stages (1.7 hpi), P123' is cleaved at the nsP1/nsP2 site with low efficiency. After replication of the viral minus-strand RNAs (4 hpi), the polyproteins are cut at the nsP1/nsP2 and nsP2/nsP3 sites very efficiently, preventing accumulation of P123' and allowing the formation of the late replication complex. In terms of processing, palmitoylated by host palmitoyltransferases ZDHHC2 and ZDHHC19. Post-translationally, phosphorylated by host on serines and threonines. Ubiquitinated; targets the protein for rapid degradation via the ubiquitin system. Nsp4 is present in extremely low quantities due to low frequency of translation through the amber stop-codon and the degradation by the ubiquitin pathway.

It localises to the host cytoplasmic vesicle membrane. Its subcellular location is the host cell membrane. The protein resides in the host cell projection. The protein localises to the host filopodium. It is found in the host nucleus. It localises to the host cytoplasm. It carries out the reaction GTP + S-adenosyl-L-methionine = N(7)-methyl-GTP + S-adenosyl-L-homocysteine. The enzyme catalyses N(7)-methyl-GTP + L-histidyl-[protein] = N(tele)-(N(7)-methylguanosine 5'-phospho)-L-histidyl-[protein] + diphosphate. The catalysed reaction is N(tele)-(N(7)-methylguanosine 5'-phospho)-L-histidyl-[protein] + a 5'-end diphospho-(purine-ribonucleoside) in mRNA + H(+) = a 5'-end (N(7)-methyl 5'-triphosphoguanosine)-(purine-ribonucleoside) in mRNA + L-histidyl-[protein]. It catalyses the reaction a 5'-end triphospho-ribonucleoside in mRNA + H2O = a 5'-end diphospho-ribonucleoside in mRNA + phosphate + H(+). It carries out the reaction a ribonucleoside 5'-triphosphate + H2O = a ribonucleoside 5'-diphosphate + phosphate + H(+). The enzyme catalyses ATP + H2O = ADP + phosphate + H(+). The catalysed reaction is RNA(n) + a ribonucleoside 5'-triphosphate = RNA(n+1) + diphosphate. It catalyses the reaction 4-O-(ADP-D-ribosyl)-L-aspartyl-[protein] + H2O = L-aspartyl-[protein] + ADP-D-ribose + H(+). It carries out the reaction 5-O-(ADP-D-ribosyl)-L-glutamyl-[protein] + H2O = L-glutamyl-[protein] + ADP-D-ribose + H(+). The enzyme catalyses RNA(n) + ATP = RNA(n)-3'-adenine ribonucleotide + diphosphate. The catalysed reaction is ADP-alpha-D-ribose 1''-phosphate + H2O = ADP-D-ribose + phosphate. Its activity is regulated as follows. Inhibited by sinefungin. Its function is as follows. Inactive precursor of the viral replicase, which is activated by cleavages carried out by the viral protease nsP2. In terms of biological role, the early replication complex formed by the polyprotein P123 and nsP4 synthesizes the minus-strand RNAs (antigenome). Polyprotein P123 is a short-lived polyprotein that accumulates during early stage of infection. As soon P123 is cleaved into mature proteins, the plus-strand RNAs synthesis begins. Functionally, the early replication complex formed by the polyprotein P123' and nsP4 synthesizes minus-strand RNAs (antigenome). Polyprotein P123' is a short-lived polyprotein that accumulates during early stage of infection. As soon P123' is cleaved into mature proteins, the plus-strand RNAs synthesis begins. Cytoplasmic capping enzyme that catalyzes two virus-specific reactions: methyltransferase and nsP1 guanylyltransferase. mRNA-capping is necessary since all viral RNAs are synthesized in the cytoplasm, and host capping enzymes are restricted to the nucleus. The enzymatic reaction involves a covalent link between 7-methyl-GMP and nsP1, whereas eukaryotic capping enzymes form a covalent complex only with GMP. NsP1 capping consists in the following reactions: GTP is first methylated into 7-methyl-GMP and then is covalently linked to nsP1 to form the m7GMp-nsP1 complex from which 7-methyl-GMP complex is transferred to the mRNA to create the cap structure. NsP1 is also needed for the initiation of the minus-strand RNAs synthesis. Probably serves as a membrane anchor for the replication complex composed of nsP1-nsP4. Nsp1 is needed for the initiation of the minus-strand RNAs synthesis. Palmitoylated nsP1 is remodeling host cell cytoskeleton, and induces filopodium-like structure formation at the surface of the host cell. Its function is as follows. Multifunctional protein whose N-terminus is part of the RNA polymerase complex and displays NTPase, RNA triphosphatase and helicase activities. NTPase and RNA triphosphatase are involved in viral RNA capping and helicase keeps a check on the dsRNA replication intermediates. The C-terminus harbors a protease that specifically cleaves the polyproteins and releases the mature proteins. Required for the shutoff of minus-strand RNAs synthesis. Inhibits host translation to ensure maximal viral gene expression and evade host immune response. In terms of biological role, seems to be essential for minus-strand RNAs and subgenomic 26S mRNAs synthesis. Displays mono-ADP-ribosylhydrolase activity. ADP-ribosylation is a post-translational modification that controls various processes of the host cell and the virus probably needs to revert it for optimal viral replication. Binds proteins of FXR and G3BP families and sequesters them into the viral RNA replication complexes thereby inhibiting the formation of host stress granules on viral mRNAs. The nsp3-FXR and nsp3-G3BP complexes bind viral RNAs and probably orchestrate the assembly of viral replication complexes, thanks to the ability of G3BP and FXR family members to self-assemble and bind DNA. Functionally, seems to be essential for minus-strand RNAs and subgenomic 26S mRNAs synthesis. Displays mono-ADP-ribosylhydrolase activity. ADP-ribosylation is a post-translational modification that controls various processes of the host cell and the virus probably needs to revert it for optimal viral replication. Binds proteins of FXR and G3BP families and sequesters them into the viral RNA replication complexes thereby inhibiting the formation of host stress granules on viral mRNAs. The nsp3'-FXR and nsp3-G3BP complexes bind viral RNAs and probably orchestrate the assembly of viral replication complexes, thanks to the ability of G3BP and FXR family members to self-assemble and bind DNA. RNA dependent RNA polymerase. Replicates genomic and antigenomic RNA by recognizing replications specific signals. The early replication complex formed by the polyprotein P123 and nsP4 synthesizes minus-strand RNAs. The late replication complex composed of fully processed nsP1-nsP4 is responsible for the production of genomic and subgenomic plus-strand RNAs. This Eastern equine encephalitis virus (strain PE-0.0155) (EEEV) protein is Polyprotein P1234.